Reading from the N-terminus, the 616-residue chain is Dihydroxy-acid dehydratase (616 aa).

A Mg(2+)-binding site is contributed by aspartate 81. Cysteine 122 is a [2Fe-2S] cluster binding site. Mg(2+) is bound by residues aspartate 123 and lysine 124. N6-carboxylysine is present on lysine 124. Cysteine 195 is a [2Fe-2S] cluster binding site. Glutamate 491 is a binding site for Mg(2+). Serine 517 (proton acceptor) is an active-site residue.

It belongs to the IlvD/Edd family. Homodimer. Requires [2Fe-2S] cluster as cofactor. The cofactor is Mg(2+).

It catalyses the reaction (2R)-2,3-dihydroxy-3-methylbutanoate = 3-methyl-2-oxobutanoate + H2O. The catalysed reaction is (2R,3R)-2,3-dihydroxy-3-methylpentanoate = (S)-3-methyl-2-oxopentanoate + H2O. Its pathway is amino-acid biosynthesis; L-isoleucine biosynthesis; L-isoleucine from 2-oxobutanoate: step 3/4. It functions in the pathway amino-acid biosynthesis; L-valine biosynthesis; L-valine from pyruvate: step 3/4. In terms of biological role, functions in the biosynthesis of branched-chain amino acids. Catalyzes the dehydration of (2R,3R)-2,3-dihydroxy-3-methylpentanoate (2,3-dihydroxy-3-methylvalerate) into 2-oxo-3-methylpentanoate (2-oxo-3-methylvalerate) and of (2R)-2,3-dihydroxy-3-methylbutanoate (2,3-dihydroxyisovalerate) into 2-oxo-3-methylbutanoate (2-oxoisovalerate), the penultimate precursor to L-isoleucine and L-valine, respectively. This is Dihydroxy-acid dehydratase from Escherichia coli O1:K1 / APEC.